Reading from the N-terminus, the 242-residue chain is Probable transcriptional regulatory protein LSL_0422 (242 aa).

The interval M1–R21 is disordered.

Belongs to the TACO1 family.

It is found in the cytoplasm. This chain is Probable transcriptional regulatory protein LSL_0422, found in Ligilactobacillus salivarius (strain UCC118) (Lactobacillus salivarius).